We begin with the raw amino-acid sequence, 269 residues long: 3-methyl-2-oxobutanoate hydroxymethyltransferase (269 aa).

Mg(2+) is bound by residues aspartate 43 and aspartate 82. 3-methyl-2-oxobutanoate contacts are provided by residues 43–44, aspartate 82, and lysine 110; that span reads DS. Glutamate 112 contacts Mg(2+). The active-site Proton acceptor is the glutamate 179.

This sequence belongs to the PanB family. Homodecamer; pentamer of dimers. It depends on Mg(2+) as a cofactor.

It localises to the cytoplasm. It catalyses the reaction 3-methyl-2-oxobutanoate + (6R)-5,10-methylene-5,6,7,8-tetrahydrofolate + H2O = 2-dehydropantoate + (6S)-5,6,7,8-tetrahydrofolate. The protein operates within cofactor biosynthesis; (R)-pantothenate biosynthesis; (R)-pantoate from 3-methyl-2-oxobutanoate: step 1/2. Functionally, catalyzes the reversible reaction in which hydroxymethyl group from 5,10-methylenetetrahydrofolate is transferred onto alpha-ketoisovalerate to form ketopantoate. This chain is 3-methyl-2-oxobutanoate hydroxymethyltransferase, found in Acinetobacter baylyi (strain ATCC 33305 / BD413 / ADP1).